Reading from the N-terminus, the 365-residue chain is DNA replication and repair protein RecF (365 aa).

Gly-30–Thr-37 contributes to the ATP binding site.

This sequence belongs to the RecF family.

The protein resides in the cytoplasm. Its function is as follows. The RecF protein is involved in DNA metabolism; it is required for DNA replication and normal SOS inducibility. RecF binds preferentially to single-stranded, linear DNA. It also seems to bind ATP. This Shewanella halifaxensis (strain HAW-EB4) protein is DNA replication and repair protein RecF.